A 330-amino-acid chain; its full sequence is Lipoyl synthase (330 aa).

Residues C77, C82, C88, C103, C107, C110, and S317 each coordinate [4Fe-4S] cluster. One can recognise a Radical SAM core domain in the interval 89 to 306; the sequence is FNHGTATFMI…RSEAEKMGFE (218 aa).

Belongs to the radical SAM superfamily. Lipoyl synthase family. It depends on [4Fe-4S] cluster as a cofactor.

It is found in the cytoplasm. The catalysed reaction is [[Fe-S] cluster scaffold protein carrying a second [4Fe-4S](2+) cluster] + N(6)-octanoyl-L-lysyl-[protein] + 2 oxidized [2Fe-2S]-[ferredoxin] + 2 S-adenosyl-L-methionine + 4 H(+) = [[Fe-S] cluster scaffold protein] + N(6)-[(R)-dihydrolipoyl]-L-lysyl-[protein] + 4 Fe(3+) + 2 hydrogen sulfide + 2 5'-deoxyadenosine + 2 L-methionine + 2 reduced [2Fe-2S]-[ferredoxin]. It functions in the pathway protein modification; protein lipoylation via endogenous pathway; protein N(6)-(lipoyl)lysine from octanoyl-[acyl-carrier-protein]: step 2/2. Functionally, catalyzes the radical-mediated insertion of two sulfur atoms into the C-6 and C-8 positions of the octanoyl moiety bound to the lipoyl domains of lipoate-dependent enzymes, thereby converting the octanoylated domains into lipoylated derivatives. In Haemophilus ducreyi (strain 35000HP / ATCC 700724), this protein is Lipoyl synthase.